An 85-amino-acid chain; its full sequence is RNA-binding protein Hfq (85 aa).

Residues 10 to 70 (DIFLNGARKN…ISTINPAKPL (61 aa)) form the Sm domain.

The protein belongs to the Hfq family. As to quaternary structure, homohexamer.

Its function is as follows. RNA chaperone that binds small regulatory RNA (sRNAs) and mRNAs to facilitate mRNA translational regulation in response to envelope stress, environmental stress and changes in metabolite concentrations. Also binds with high specificity to tRNAs. The protein is RNA-binding protein Hfq of Clostridium botulinum (strain 657 / Type Ba4).